Here is a 178-residue protein sequence, read N- to C-terminus: Imidazoleglycerol-phosphate dehydratase (178 aa).

This sequence belongs to the imidazoleglycerol-phosphate dehydratase family.

It is found in the cytoplasm. It catalyses the reaction D-erythro-1-(imidazol-4-yl)glycerol 3-phosphate = 3-(imidazol-4-yl)-2-oxopropyl phosphate + H2O. Its pathway is amino-acid biosynthesis; L-histidine biosynthesis; L-histidine from 5-phospho-alpha-D-ribose 1-diphosphate: step 6/9. The chain is Imidazoleglycerol-phosphate dehydratase from Archaeoglobus fulgidus (strain ATCC 49558 / DSM 4304 / JCM 9628 / NBRC 100126 / VC-16).